The following is a 165-amino-acid chain: Putative TRAP transporter small permease protein HI_0051 (165 aa).

4 helical membrane-spanning segments follow: residues 20-40 (LEYL…FNSV), 51-71 (FSEE…IILV), 94-114 (IVLI…AYGA), and 136-156 (LYLA…FSMI).

This sequence belongs to the TRAP transporter small permease family.

It localises to the cell inner membrane. This chain is Putative TRAP transporter small permease protein HI_0051, found in Haemophilus influenzae (strain ATCC 51907 / DSM 11121 / KW20 / Rd).